The sequence spans 492 residues: MNVSPQLLGYVVYTAIYNVYFHPLANFPGPKYLAASRIPLAFKRLTGEEVAMTYKLHIKYGPYVRVSPDELSTISTAATKDVYGHNTRAGGVPKDFKAYYMKNQRKDGTEGLLTAGDEEHYRQRKVFAPAFSDRAIREQEPLLKKYTDLLVAKSYEKCQTAGKVDMVMFFNFATFDFIADCVFGDSLHHLESMEYHPFLANITATVRFSAMRRVLRSFPILQAIFEAFMPKSMIKKRLEHVKFCDERVMNRLANDNPSHPDFWTLVEHAEAKGNGLTKGEMRQNGFLLLTAATETTSSLMSAITYLLCKNPEKMKKLQAEVRGAFKSTDEMNTITLPKLQYLQMAIEEGLRVYPPVPGGLPRRVVQPGTTLDGSASNMHIQSVVFYSQYASYHSPSHFARPHEFIPERWSQNPPAEFANDRLEAVQAFSAGPRDCIGKNLAYHEARMLLAKFVFTYDIELCKESSDWIKQKVYIVGAKSPLWVKLVKHERAD.

Cysteine 435 serves as a coordination point for heme.

The protein belongs to the cytochrome P450 family. Heme is required as a cofactor.

Its pathway is secondary metabolite biosynthesis. Cytochrome P450 monooxygenase; part of the gene cluster that mediates the biosynthesis of radicicol, a resorcylic acid lactone (RAL) that irreversibly inhibits the HSP90 molecular chaperone, an important target for cancer chemotherapy. The radicicol cluster encodes only two apparent post-PKS enzymes, a cytochrome P450 monooxygenase (rdc4) and a non-heme halogenase (rdc2) that could introduce the epoxide and the chlorine, respectively. If this cluster includes all the genes required for radicicol biosynthesis, the remaining structural features of radicicol are presumably generated by the PKSs rdc1 and rdc5. The C-2' ketone could arise if the R-PKS rdc5 and NR-PKS rdc1 each carry out four iterations, in contrast to the five iteration-three iteration split for the hypothemycin PKSs. The origin of the cis 5',6' double bond is not known. The radicicol R-PKS rdc5 ER domain may catalyze either double bond isomerization or reduction in the third iteration. In Metacordyceps chlamydosporia (Nematophagous fungus), this protein is Cytochrome P450 monooxygenase rdc4.